The chain runs to 209 residues: PITH domain-containing protein 1 (209 aa).

The region spanning 18–190 (SDGPERGLEY…EVTICNYEAA (173 aa)) is the PITH domain.

Belongs to the PITHD1 family.

The protein localises to the cytoplasm. Functionally, may play a role in promoting megakaryocyte differentiation by up-regulating RUNX1 expression. The sequence is that of PITH domain-containing protein 1 (pithd1) from Xenopus laevis (African clawed frog).